Reading from the N-terminus, the 955-residue chain is RNA polymerase-associated protein RapA (955 aa).

The Helicase ATP-binding domain maps to 163-333 (EVGHRYAPRV…FARLRLLDPE (171 aa)). 176–183 (DEVGLGKT) serves as a coordination point for ATP. The DEAH box signature appears at 279-282 (DEAH). The 165-residue stretch at 478 to 642 (RVDWLLELLL…AVRDELFELL (165 aa)) folds into the Helicase C-terminal domain.

This sequence belongs to the SNF2/RAD54 helicase family. RapA subfamily. Interacts with the RNAP. Has a higher affinity for the core RNAP than for the holoenzyme. Its ATPase activity is stimulated by binding to RNAP.

Transcription regulator that activates transcription by stimulating RNA polymerase (RNAP) recycling in case of stress conditions such as supercoiled DNA or high salt concentrations. Probably acts by releasing the RNAP, when it is trapped or immobilized on tightly supercoiled DNA. Does not activate transcription on linear DNA. Probably not involved in DNA repair. The chain is RNA polymerase-associated protein RapA from Aeromonas salmonicida (strain A449).